The following is a 705-amino-acid chain: Double-strand break repair protein MRE11 (705 aa).

Mn(2+) is bound by residues Asp-15, His-17, Asp-55, and Asn-122. The Proton donor role is filled by His-123. His-220, His-248, and His-250 together coordinate Mn(2+). Residues 505–514 show a composition bias toward basic and acidic residues; sequence RSLRSKEDSR. The disordered stretch occupies residues 505 to 705; the sequence is RSLRSKEDSR…TRNYGAVRRR (201 aa). 2 stretches are compositionally biased toward polar residues: residues 515 to 538 and 589 to 605; these read FTSSSQNLDTGGRSVTAQSNLNSF and SMKQTTLNFSQSRSSAA. The segment covering 641-663 has biased composition (basic residues); sequence GRKRAAPRGGRGRGRGATAKRGR.

The protein belongs to the MRE11/RAD32 family. Component of the MRN complex composed of two heterodimers RAD50/MRE11 associated with a single NBS1. Mn(2+) serves as cofactor.

It is found in the nucleus. Its subcellular location is the chromosome. Functionally, core component of the MRN complex, which plays a central role in double-strand break (DSB) repair, DNA recombination, maintenance of telomere integrity and meiosis. The MRN complex is involved in the repair of DNA double-strand breaks (DSBs) via homologous recombination (HR), an error-free mechanism which primarily occurs during S and G2 phases. The complex (1) mediates the end resection of damaged DNA, which generates proper single-stranded DNA, a key initial steps in HR, and is (2) required for the recruitment of other repair factors and efficient activation of ATM and ATR upon DNA damage. Within the MRN complex, MRE11 possesses both single-strand endonuclease activity and double-strand-specific 3'-5' exonuclease activity. MRE11 first endonucleolytically cleaves the 5' strand at DNA DSB ends to prevent non-homologous end joining (NHEJ) and licence HR. It then generates a single-stranded DNA gap via 3' to 5' exonucleolytic degradation, which is required for single-strand invasion and recombination. The polypeptide is Double-strand break repair protein MRE11 (Oryza sativa subsp. indica (Rice)).